The following is a 107-amino-acid chain: Cytochrome c oxidase assembly protein COX16 homolog, mitochondrial (107 aa).

The Mitochondrial matrix segment spans residues 1–14; sequence MFGYAVRRALRKSK. The helical transmembrane segment at 15-37 threads the bilayer; the sequence is TLRYGVPMLLLIVGGSFGLREFS. The Mitochondrial intermembrane segment spans residues 38 to 107; the sequence is QIRYDAVKIK…PEILKTNKTT (70 aa). The disordered stretch occupies residues 80–107; sequence NIRGPRPWEDPDLLQGRNPEILKTNKTT.

It belongs to the COX16 family. As to quaternary structure, associates with the MITRAC complex. Interacts with MT-CO2/COX; specifically interacts with newly synthesized MT-CO2/COX. Interacts with SCO1, SCO2 and COA6.

The protein resides in the mitochondrion inner membrane. Its function is as follows. Required for the assembly of the mitochondrial respiratory chain complex IV (CIV), also known as cytochrome c oxidase. Promotes the insertion of copper into the active site of cytochrome c oxidase subunit II (MT-CO2/COX2). Interacts specifically with newly synthesized MT-CO2/COX and its copper center-forming metallochaperones SCO1, SCO2 and COA6. Probably facilitates MT-CO2/COX2 association with the MITRAC assembly intermediate containing MT-CO1/COX1, thereby participating in merging the MT-CO1/COX1 and MT-CO2/COX2 assembly lines. The protein is Cytochrome c oxidase assembly protein COX16 homolog, mitochondrial of Bos taurus (Bovine).